We begin with the raw amino-acid sequence, 1512 residues long: Probable RNA-directed RNA polymerase (1512 aa).

The protein belongs to the totiviridae RNA-directed RNA polymerase family.

It catalyses the reaction RNA(n) + a ribonucleoside 5'-triphosphate = RNA(n+1) + diphosphate. Functionally, RNA-dependent RNA polymerase which replicates the viral genome. Catalyzes the transcription of fully conservative plus-strand genomic RNAs that are extruded from the virion into the cytoplasm where they function as mRNAs for translation of viral proteins and also as substrates for encapsidation to form new virions. Once encapsidated, the positive strand is converted to dsRNA by the RNA-directed RNA polymerase. This is Probable RNA-directed RNA polymerase (gag-pol) from Saccharomyces cerevisiae virus L-BC (ScV-L-BC).